We begin with the raw amino-acid sequence, 256 residues long: Thiazole synthase (256 aa).

K97 acts as the Schiff-base intermediate with DXP in catalysis. 1-deoxy-D-xylulose 5-phosphate contacts are provided by residues G158, 184–185 (AG), and 206–207 (NT).

It belongs to the ThiG family. In terms of assembly, homotetramer. Forms heterodimers with either ThiH or ThiS.

The protein resides in the cytoplasm. The enzyme catalyses [ThiS sulfur-carrier protein]-C-terminal-Gly-aminoethanethioate + 2-iminoacetate + 1-deoxy-D-xylulose 5-phosphate = [ThiS sulfur-carrier protein]-C-terminal Gly-Gly + 2-[(2R,5Z)-2-carboxy-4-methylthiazol-5(2H)-ylidene]ethyl phosphate + 2 H2O + H(+). The protein operates within cofactor biosynthesis; thiamine diphosphate biosynthesis. Catalyzes the rearrangement of 1-deoxy-D-xylulose 5-phosphate (DXP) to produce the thiazole phosphate moiety of thiamine. Sulfur is provided by the thiocarboxylate moiety of the carrier protein ThiS. In vitro, sulfur can be provided by H(2)S. The sequence is that of Thiazole synthase from Pelotomaculum thermopropionicum (strain DSM 13744 / JCM 10971 / SI).